A 18141-amino-acid chain; its full sequence is Titin (18141 aa).

Residues 1 to 31 (MQRQNPNPYQQQNQQHQQVQQFSSQEYSHSS) show a composition bias toward low complexity. Residues 1–69 (MQRQNPNPYQ…QHHGGSIGGA (69 aa)) form a disordered region. Residues 32 to 47 (QEQHQEQRISRTEQHV) are compositionally biased toward basic and acidic residues. The span at 48-62 (QRSQVTTQRQVQQHH) shows a compositional bias: low complexity. Ig-like domains follow at residues 86 to 177 (PPVF…VYIQ), 255 to 343 (PQIS…AVLA), 372 to 461 (PAFV…AQLN), 471 to 559 (PQFV…ARLY), 618 to 708 (PQFI…AILS), 751 to 842 (PQFI…SSIR), 890 to 981 (PQFK…AQLT), 1024 to 1115 (PRFL…ATMI), 1158 to 1249 (PVFV…ACVR), 1291 to 1381 (PQFT…CSVR), 1424 to 1515 (PRFL…VELQ), 1558 to 1643 (PVFT…EAIT), 1691 to 1781 (PVFT…ASLI), 1824 to 1917 (PVFV…LNVT), 1958 to 2050 (PQFG…VNVT), 2089 to 2180 (PIFL…CNVR), and 2222 to 2313 (PHFT…TNLR). A disordered region spans residues 236–266 (EQDSQLSQELDRNQGPAQAPQISQKPRSSKL). Cysteine 393 and cysteine 445 are disulfide-bonded. Intrachain disulfides connect cysteine 1312/cysteine 1365, cysteine 1446/cysteine 1499, and cysteine 1579/cysteine 1632. A disulfide bond links cysteine 1846 and cysteine 1899. The cysteines at positions 2111 and 2164 are disulfide-linked. The span at 2338–2347 (STAPHQRQEP) shows a compositional bias: basic and acidic residues. The disordered stretch occupies residues 2338–2357 (STAPHQRQEPETPGTRQRPV). Ig-like domains follow at residues 2356 to 2449 (PVFT…MRVV), 2488 to 2581 (PIFT…MKVK), and 2622 to 2715 (PVFT…LKIE). The disordered stretch occupies residues 2731 to 2750 (PRIGELEAPKEGRPEAPEPT). Over residues 2734-2746 (GELEAPKEGRPEA) the composition is skewed to basic and acidic residues. Ig-like domains are found at residues 2754 to 2844 (PVFI…GTLK), 2891 to 2983 (PPVW…TTIF), 3029 to 3116 (PRFT…AEIS), 3130 to 3221 (PRFT…TTLN), 3263 to 3354 (PKFI…ASLK), 3401 to 3494 (PVFT…MKIQ), 3539 to 3625 (PEFI…ATVS), 3676 to 3767 (PKFT…AKVT), and 3811 to 3901 (PKFT…ATVS). Cysteine 2775 and cysteine 2828 are oxidised to a cystine. Residues cysteine 3152 and cysteine 3205 are joined by a disulfide bond. Cystine bridges form between cysteine 3560/cysteine 3613, cysteine 3698/cysteine 3751, and cysteine 3832/cysteine 3885. One copy of the TPR 1 repeat lies at 3910 to 3944 (LQNQVPRGMKRSDALTQMEATIKKYTSEVHLTEDD). Ig-like domains are found at residues 3954–4047 (PRFV…IKVS) and 4092–4181 (PVFV…LKVV). An intrachain disulfide couples cysteine 3976 to cysteine 4029. Residues 4204 to 4229 (AAYQKERQENELEKVFDERKQVLSEQ) are a coiled coil. Disordered stretches follow at residues 4226 to 4254 (LSEQSSHTLKGVEHLKPKQYKPPTPDWQQ) and 4299 to 4336 (SSQAKGMAQSYEENLQEKTSTTEVQAAPPKGIAQPSES). The segment covering 4309–4322 (YEENLQEKTSTTEV) has biased composition (polar residues). Ig-like domains are found at residues 4394–4482 (PVFT…ANLV), 4497–4585 (PSFV…GDCI), 4604–4692 (PHIV…AQLK), and 4703–4791 (PTIT…AKLT). The TPR 2 repeat unit spans residues 4403-4438 (CRVFENEQAKFEVEFEGEPNPTVKWYRESFPIQNSP). The cysteines at positions 4625 and 4676 are disulfide-linked. Disordered stretches follow at residues 4803–4891 (RTID…DKGV), 5318–5368 (DELV…QPEP), 5413–5648 (RVIP…EVDA), 5667–5701 (IKKTKRPKSTKEVTEELFEEQPEEEISPEEEVPQK), 5718–5748 (KKTKKPKLTQQVTEEETPHEEIIKESEEVVQ), 5775–5982 (KEEE…QRLL), 6034–6350 (KRVK…MPVD), and 6364–6393 (EEEVVPTEETPEAKQKAHKKRTKRLKEASV). A compositionally biased stretch (low complexity) spans 4822–4841 (PESPHAFQPGQQPGQQFGQF). The span at 4852-4863 (GRSRQKKPKVRS) shows a compositional bias: basic residues. Composition is skewed to basic and acidic residues over residues 5344–5357 (QPQEKTFEEAHDEL), 5436–5447 (RPKEAVKAEEIQ), 5541–5552 (QKPDEQKQELPK), 5591–5621 (IEEKLDVAPTKTYEKAVDVLPDEPKVEEKPE), and 5633–5645 (PKSEPTEEVHPDE). One copy of the TPR 3 repeat lies at 5575–5613 (PVLWERKKKKPQPQDVIEEKLDVAPTKTYEKAVDVLPDE). Positions 5681–5697 (EELFEEQPEEEISPEEE) are enriched in acidic residues. Acidic residues-rich tracts occupy residues 5779 to 5792 (IPTEETVEEEETAE) and 5818 to 5860 (DVEE…QDEI). Positions 5865–5874 (RKVKKAKKPK) are enriched in basic residues. Positions 5883-5904 (EIEEDQPEEEVLQEEIIGEQEE) are enriched in acidic residues. Residues 5910–5920 (RKVKSIKKPKK) are compositionally biased toward basic residues. Residues 5921–5971 (VVTEKTVDQTEQPEKPEESQAEEVKETVTEEPKKPKPAPEEAKVEQVEKIS) are compositionally biased toward basic and acidic residues. Basic residues predominate over residues 6034–6043 (KRVKKKKPKT). The segment covering 6049 to 6079 (ESTEEPAEETEEFEEEATQPEEVQPVEEIPE) has biased composition (acidic residues). Composition is skewed to basic and acidic residues over residues 6081-6092 (PQVKEVADERKT), 6099-6133 (RKEEIIEKVEEVALKRVTRPKKELPQEATIEEVRL), 6141-6169 (IKPEEVKLEEVDLQHVEKKEDEIVQEEKR), 6195-6209 (EAEHIELEKQPKPEE), 6217-6234 (KRGEKKQPVEEVLEEKKW), and 6259-6268 (PIEEQQKPEK). Residues 6281–6290 (PESEEEELEL) show a composition bias toward acidic residues. Residues 6291–6306 (EPLKLPEDKKPKEPKA) are compositionally biased toward basic and acidic residues. Over residues 6307–6318 (KKEKKKKPKLKK) the composition is skewed to basic residues. Composition is skewed to acidic residues over residues 6325–6349 (EVSEEVAEPFDEPIAEEDEVEEMPV) and 6364–6373 (EEEVVPTEET). Ig-like domains are found at residues 6536–6624 (PRIT…TNII), 6633–6728 (PQFT…NILS), 6741–6830 (PTVT…VVVS), 6841–6929 (PRFI…ATVN), 6942–7034 (PRFV…VKIQ), 7066–7151 (PKII…VAVT), and 7189–7279 (PSLL…FDIS). A disulfide bridge connects residues cysteine 6557 and cysteine 6608. Cysteine 6964 and cysteine 7016 are disulfide-bonded. Residues 7621–7663 (KIQVQTKQIAQMNTKIKKHKKHKQQEQEVSETTIQCEQKETLA) are a coiled coil. Disordered regions lie at residues 7773-7793 (AKTAESSKELPSKIPKSVKAQ), 9414-9440 (EEDDKQPETTVTVEEVPYEEEKPEEIQ), 9485-9510 (EEDDKQPETTVTVEEVPYEEEKPEEI), 9556-9582 (EEDDKQPETTVTVEEVPYEEEKPEEIQ), 9627-9652 (EEDDKQPETTVTVEEVPYEEEKPEEI), 9698-9724 (EEDDKQPETTVTVEEVPYEEEKPEEIQ), 9769-9796 (EEDDKQPETTVTVEEVPYEEEKPEEIQE), 9838-9865 (TAEEDDKQPETTVTVEEVPYEEEKPEEI), 9911-9937 (EEDDKQPETTVTVEEVPYEEEKPEEIQ), 9982-10008 (EEDDKQPETTVTVEEVPYEEEKPEEIQ), 10053-10080 (EEDDKQPETTVTVEEVPYEEEKPEEIQE), 10125-10149 (ENDKQPETTVTVEEVPYEEEKPEEI), 10195-10220 (EEDDKQPKTTVTVEEVPYEEEKPEEI), 10266-10291 (EEDDKQPETTVTVEEVPYEEEKPEEI), 10337-10364 (EEDDKQPETTVTVEEVPYEEEKPEEIQE), 10408-10433 (EEDDKQPETTVTVEEVPYEEEKPEEI), 10479-10504 (EEDDKQPETTVTVEEVPYEEEKPEEI), 10550-10576 (EEDDKQPETTVTVEEVPYEEEKPEEIQ), 10621-10648 (EEDDKQPETTVTVEEVPYEEEKPEEIQE), 10692-10717 (EEDDKQPETTVTVEEVPYEEEKPEEI), 10763-10788 (EEDDKQPETTVTVEEVPYEEEKPEEI), 10834-10860 (EEDDKQPETTVTVEEVPYEEEKPEEIQ), 10905-10932 (EEDDKQPETTVTVEEVPYEEEKPEEIQE), 11047-11073 (EEDDKQPETTVTVEEVPYEEEKPEEIQ), 11118-11143 (EEDDKQPETTVTVEEVPYEEEKPEEI), 11189-11216 (EEDDKQPETTVTVEEVPYEEEKPEEIQE), 11260-11286 (EEDDKQPETTVTVEEVPYEEEKPEEIQ), 11679-11703 (EELDENKKPKKKTTKTRTFKKRGPD), and 11767-11795 (TEPEEASADALQKPTKDKTPKQKKTLETP). The segment covering 7774–7783 (KTAESSKELP) has biased composition (basic and acidic residues). 26 stretches are compositionally biased toward acidic residues: residues 9429-9440 (VPYEEEKPEEIQ), 9500-9510 (VPYEEEKPEEI), 9571-9582 (VPYEEEKPEEIQ), 9642-9652 (VPYEEEKPEEI), 9713-9724 (VPYEEEKPEEIQ), 9784-9796 (VPYEEEKPEEIQE), 9855-9865 (VPYEEEKPEEI), 9926-9937 (VPYEEEKPEEIQ), 9997-10008 (VPYEEEKPEEIQ), 10068-10080 (VPYEEEKPEEIQE), 10139-10149 (VPYEEEKPEEI), 10210-10220 (VPYEEEKPEEI), 10281-10291 (VPYEEEKPEEI), 10352-10364 (VPYEEEKPEEIQE), 10423-10433 (VPYEEEKPEEI), 10494-10504 (VPYEEEKPEEI), 10565-10576 (VPYEEEKPEEIQ), 10636-10648 (VPYEEEKPEEIQE), 10707-10717 (VPYEEEKPEEI), 10778-10788 (VPYEEEKPEEI), 10849-10860 (VPYEEEKPEEIQ), 10920-10932 (VPYEEEKPEEIQE), 11062-11073 (VPYEEEKPEEIQ), 11133-11143 (VPYEEEKPEEI), 11204-11216 (VPYEEEKPEEIQE), and 11275-11286 (VPYEEEKPEEIQ). Positions 11686 to 11699 (KPKKKTTKTRTFKK) are enriched in basic residues. Residues 11780–11792 (PTKDKTPKQKKTL) are compositionally biased toward basic and acidic residues. Residues 11872-11905 (KTVLQPYQRTEMELPQRARRDSSFKQPVKLTPMK) form a TPR 4 repeat. 18 disordered regions span residues 12003–12201 (FKHS…ADTK), 12451–12471 (TLQVGVTEHEPTKKLKTKKPE), 12685–12767 (TVDD…LPGP), 12943–12971 (IDHENAEEAPKVLKSKVSEEKPKSKKEKS), 13131–13154 (IKKKKVSPKHGPKEQVFEITETRP), 13325–13349 (QSFESPEPTEGEAHETKTKTKKPKK), 13471–13492 (EEYEPTEMDSKKKPKKKVKSHN), 13554–13576 (EADKPIKQPTQDQPIKKEKPLKK), 13702–13792 (KVQK…KSPD), 13891–13914 (EEVQEKSKEAPEEKKAKTVRKAKK), 13951–13994 (MKRK…DEPK), 14073–14094 (TTVPTETPDQDQPSVKQKRTKK), 14109–14322 (EEEA…QVTT), 14354–14377 (EYEPEPVNQDEKPKEPKKKTRKVK), 14414–14448 (PLDSPIDVLDESPKEVQKKDKKSRSTKVPNEETPV), 14533–14566 (EPEIASPQSIEEHPEQSKEKLAPKPKKTVRKVKK), 14583–14720 (KVDL…SELP), and 14756–14789 (VEESQPIVEEVEDEEPQPATEETVEDVTKPKSKK). Composition is skewed to basic and acidic residues over residues 12022–12035 (ESDHSDKSNKELLH), 12044–12054 (EKIETPDESRK), 12124–12134 (MERTSDIREES), 12183–12201 (LNLRKRQGERPDDDKADTK), 12457–12471 (TEHEPTKKLKTKKPE), and 12685–12709 (TVDDVRVPKDKKKKIDNQKKIKISE). The segment covering 12731-12741 (HDEDLQTDEYS) has biased composition (acidic residues). The span at 12750 to 12760 (KSKKKSTKKQK) shows a compositional bias: basic residues. Residues 13141–13154 (GPKEQVFEITETRP) are compositionally biased toward basic and acidic residues. Residues 13482–13492 (KKPKKKVKSHN) show a composition bias toward basic residues. The stretch at 13566 to 13599 (QPIKKEKPLKKKKDVEYPVSLEAFDHTVKVVSEP) is one TPR 5 repeat. The segment covering 13733–13747 (LVKEDLDQPIERALE) has biased composition (basic and acidic residues). Positions 13771–13781 (PKPKKISKPKS) are enriched in basic residues. Composition is skewed to basic and acidic residues over residues 13893–13906 (VQEKSKEAPEEKKA) and 13975–13984 (EDKPVEKISE). Residues 14221–14240 (TVEKPLEALHTDSDLEKPDV) are compositionally biased toward basic and acidic residues. The span at 14264-14274 (KISSEQPKQPS) shows a compositional bias: low complexity. Residues 14282-14294 (VTEHDLKPEEEKP) show a composition bias toward basic and acidic residues. The span at 14542 to 14554 (IEEHPEQSKEKLA) shows a compositional bias: basic and acidic residues. Positions 14555 to 14564 (PKPKKTVRKV) are enriched in basic residues. Over residues 14583–14599 (KVDLEKYEKVEMPEKPV) the composition is skewed to basic and acidic residues. Positions 14652 to 14662 (ETTVDTTDIPE) are enriched in low complexity. The span at 14664–14683 (TPTQTAQPEDTATAQITPSA) shows a compositional bias: polar residues. Residues 14684–14697 (QEEKSTQDDTKDTI) show a composition bias toward basic and acidic residues. The segment covering 14756–14771 (VEESQPIVEEVEDEEP) has biased composition (acidic residues). Residues 14904 to 14936 (IPKTTDIGAIKDNGELSRNIEEAEEILKFKPHK) form a TPR 6 repeat. Disordered stretches follow at residues 14956-15208 (EKYI…VSVK), 15301-15329 (TRKKKPKPQQPEEFEVTLKEPKEEQIQPD), 15425-15448 (ISETQSIEEKPIEVAEEAPEETPK), 15578-15597 (IRVSESEPKPEEPSVEQFTV), 15697-15722 (EKPAEAIVEEEEPVVTEPIEEAPKPE), 15825-15876 (EEPK…VEEP), 15951-15973 (ESQPEAVEDKEVSLPKKKPKAPI), and 16181-16206 (QEEEYEEGEDIEEFVVSQQRKPKPLQ). Composition is skewed to basic and acidic residues over residues 14967-14989 (EKTPYKKPEKAPKPEEKQEDVKL), 15024-15046 (ELKQKPKEVEIVEEQTKKPKDGE), 15069-15080 (QIEHPEIPEKVK), 15088-15097 (KPKDKSKSEP), 15109-15139 (PKEEEAIPEQDVKFRKPERDAPEETDSEIKL), 15169-15179 (IEDKAIDDEKK), 15189-15198 (QPKEQEIAKE), 15316-15325 (VTLKEPKEEQ), 15425-15437 (ISETQSIEEKPIE), and 15578-15589 (IRVSESEPKPEE). Acidic residues predominate over residues 15703-15716 (IVEEEEPVVTEPIE). The span at 15951-15964 (ESQPEAVEDKEVSL) shows a compositional bias: basic and acidic residues. The span at 16183-16193 (EEYEEGEDIEE) shows a compositional bias: acidic residues. Residues 16409–16470 (ENLNIMYSIC…PAQYLMEPEE (62 aa)) enclose the SH3 domain. 9 Ig-like domains span residues 16501–16590 (PRFI…TELI), 16625–16719 (PTFS…ITLK), 16728–16811 (PQIL…ANLT), 16822–16916 (PPLF…VEVD), 16919–17001 (TFTK…STVE), 17007–17091 (PDFI…CELV), 17097–17180 (PEIV…AKLT), 17184–17270 (PLVD…TKLC), and 17277–17363 (PPVI…AEAS). An intrachain disulfide couples cysteine 16940 to cysteine 16989. The Fibronectin type-III 1 domain occupies 17374-17467 (APGTPQPLEI…LSPPIRLVPK (94 aa)). 2 Ig-like domains span residues 17473-17558 (PSVQ…CRLK) and 17563-17653 (PVLE…CTVQ). An intrachain disulfide couples cysteine 17494 to cysteine 17542. Fibronectin type-III domains are found at residues 17660–17755 (RPQS…TKKF), 17760–17861 (PPRG…TPPS), 17862–17958 (PPQN…THAS), and 17982–18078 (PPTG…AMTA). Residues 17694–17728 (LEKCDVQNNVWMKVSDFNKDIKSYAVQKLSMNAQY) form a TPR 7 repeat. The tract at residues 17741–17771 (SEPTESDPVTITKKFEKPSPPRGPTTVSGMN) is disordered.

Belongs to the protein kinase superfamily. CAMK Ser/Thr protein kinase family. Interacts with Msp300; this interaction mediates the recruitment of Msp300 to the Z-disks. In terms of tissue distribution, expressed in the mesoderm at stage 11, several hours before myoblast fusion, and persists in most muscle cells, somatic, visceral and pharyngeal muscles and their precursors, until the third instar. Isoform A: Expressed in the indirect flight muscle (at protein level).

The protein localises to the cytoplasm. Its subcellular location is the nucleus. The protein resides in the chromosome. It localises to the myofibril. It is found in the sarcomere. The protein localises to the z line. Its function is as follows. Key component in the assembly and functioning of adult and embryonic striated muscles and muscle tendons. By providing connections at the level of individual microfilaments, it contributes to the fine balance of forces between the two halves of the sarcomere. The size and extensibility of the cross-links are the main determinants of sarcomere extensibility properties of muscle. In non-muscle cells, seems to play a role in chromosome condensation and chromosome segregation during mitosis. Might link the lamina network to chromatin or nuclear actin, or both during interphase. The sequence is that of Titin (sls) from Drosophila melanogaster (Fruit fly).